We begin with the raw amino-acid sequence, 556 residues long: 2-isopropylmalate synthase (556 aa).

The Pyruvate carboxyltransferase domain occupies 33 to 307 (PIWCSSDLRD…DPELDFSDID (275 aa)). The Mg(2+) site is built by Asp42, His246, His248, and Asn282. The tract at residues 439-556 (ANTPYALISH…SLSQTQAKAA (118 aa)) is regulatory domain.

It belongs to the alpha-IPM synthase/homocitrate synthase family. LeuA type 2 subfamily. As to quaternary structure, homodimer. Mg(2+) is required as a cofactor.

The protein resides in the cytoplasm. The catalysed reaction is 3-methyl-2-oxobutanoate + acetyl-CoA + H2O = (2S)-2-isopropylmalate + CoA + H(+). It functions in the pathway amino-acid biosynthesis; L-leucine biosynthesis; L-leucine from 3-methyl-2-oxobutanoate: step 1/4. Functionally, catalyzes the condensation of the acetyl group of acetyl-CoA with 3-methyl-2-oxobutanoate (2-ketoisovalerate) to form 3-carboxy-3-hydroxy-4-methylpentanoate (2-isopropylmalate). This chain is 2-isopropylmalate synthase, found in Pseudomonas savastanoi pv. phaseolicola (strain 1448A / Race 6) (Pseudomonas syringae pv. phaseolicola (strain 1448A / Race 6)).